Reading from the N-terminus, the 310-residue chain is AA9 family lytic polysaccharide monooxygenase A (310 aa).

The first 21 residues, 1–21, serve as a signal peptide directing secretion; it reads MPSTKVAALSAVLALASTVAG. Cu(2+) is bound by residues histidine 22 and histidine 107. 2 disulfides stabilise this stretch: cysteine 77–cysteine 199 and cysteine 118–cysteine 122. Residues asparagine 121 and asparagine 159 are each glycosylated (N-linked (GlcNAc...) asparagine). Histidine 185 contacts O2. Tyrosine 196 is a binding site for Cu(2+).

It belongs to the polysaccharide monooxygenase AA9 family. It depends on Cu(2+) as a cofactor.

It is found in the secreted. The catalysed reaction is [(1-&gt;4)-beta-D-glucosyl]n+m + reduced acceptor + O2 = 4-dehydro-beta-D-glucosyl-[(1-&gt;4)-beta-D-glucosyl]n-1 + [(1-&gt;4)-beta-D-glucosyl]m + acceptor + H2O.. In terms of biological role, lytic polysaccharide monooxygenase (LPMO) that depolymerizes crystalline and amorphous polysaccharides via the oxidation of scissile alpha- or beta-(1-4)-glycosidic bonds, yielding C1, C4 as well as C6 oxidation products. Catalysis by LPMOs requires the reduction of the active-site copper from Cu(II) to Cu(I) by a reducing agent and H(2)O(2) or O(2) as a cosubstrate. Active on cellulose, but not on xylan, starch, or chitin. The chain is AA9 family lytic polysaccharide monooxygenase A from Talaromyces pinophilus (Penicillium pinophilum).